The sequence spans 320 residues: Glycerol-3-phosphate dehydrogenase [NAD(P)+] (320 aa).

Phenylalanine 11, arginine 30, and lysine 102 together coordinate NADPH. Positions 102, 130, and 132 each coordinate sn-glycerol 3-phosphate. Alanine 134 is a binding site for NADPH. Positions 185, 238, 248, 249, and 250 each coordinate sn-glycerol 3-phosphate. The Proton acceptor role is filled by lysine 185. Arginine 249 lines the NADPH pocket. Residue glutamate 270 participates in NADPH binding.

The protein belongs to the NAD-dependent glycerol-3-phosphate dehydrogenase family.

The protein localises to the cytoplasm. The enzyme catalyses sn-glycerol 3-phosphate + NAD(+) = dihydroxyacetone phosphate + NADH + H(+). The catalysed reaction is sn-glycerol 3-phosphate + NADP(+) = dihydroxyacetone phosphate + NADPH + H(+). Its pathway is membrane lipid metabolism; glycerophospholipid metabolism. In terms of biological role, catalyzes the reduction of the glycolytic intermediate dihydroxyacetone phosphate (DHAP) to sn-glycerol 3-phosphate (G3P), the key precursor for phospholipid synthesis. The sequence is that of Glycerol-3-phosphate dehydrogenase [NAD(P)+] from Roseobacter denitrificans (strain ATCC 33942 / OCh 114) (Erythrobacter sp. (strain OCh 114)).